Consider the following 394-residue polypeptide: Sugar efflux transporter C (394 aa).

Residues 1–10 are Periplasmic-facing; the sequence is MQKTATTPSK. Residues 11–31 form a helical membrane-spanning segment; sequence ILDLTAAAFLLVAFLTGIAGA. Topologically, residues 32-49 are cytoplasmic; that stretch reads LQTPTLSIFLADELKARP. A helical transmembrane segment spans residues 50 to 70; it reads IMVGFFFTGSAIMGILVSQFL. The Periplasmic segment spans residues 71 to 80; sequence ARHSDKQGDR. Residues 81–101 traverse the membrane as a helical segment; the sequence is KLLILLCCLFGVLACTLFAWN. Over 102-104 the chain is Cytoplasmic; the sequence is RNY. A helical transmembrane segment spans residues 105–125; sequence FILLSTGVLLSSFASTANPQM. Residues 126–150 lie on the Periplasmic side of the membrane; sequence FALAREHADRTGRETVMFSTFLRAQ. A helical transmembrane segment spans residues 151–171; the sequence is ISLAWVIGPPLAYELAMGFSF. A topological domain (cytoplasmic) is located at residue Lys172. The chain crosses the membrane as a helical span at residues 173–193; sequence VMYLTAAIAFVVCGLIVWLFL. The Periplasmic segment spans residues 194–224; that stretch reads PSIQRNIPVVTQPVEILPSTHRKRDTRLLFV. A helical membrane pass occupies residues 225–245; sequence VCSMMWAANNLYMINMPLFII. Residues 246 to 253 lie on the Cytoplasmic side of the membrane; that stretch reads DELHLTDK. A helical transmembrane segment spans residues 254 to 274; the sequence is LTGEMIGIAAGLEIPMMLIAG. Residues 275–283 lie on the Periplasmic side of the membrane; that stretch reads YYMKRIGKR. The chain crosses the membrane as a helical span at residues 284–304; sequence LLMLIAIVSGMCFYASVLMAT. Residues 305–310 lie on the Cytoplasmic side of the membrane; the sequence is TPAVEL. The helical transmembrane segment at 311-331 threads the bilayer; that stretch reads ELQILNAIFLGILCGIGMLYF. Residues 332–370 are Periplasmic-facing; it reads QDLMPEKIGSATTLYANTSRVGWIIAGSVDGIMVEIWSY. A helical membrane pass occupies residues 371–391; it reads HALFWLAIGMLGIAMICLLFI. The Cytoplasmic segment spans residues 392–394; sequence KDI.

The protein belongs to the major facilitator superfamily. Set transporter family.

Its subcellular location is the cell inner membrane. Involved in the efflux of sugars. The physiological role may be the detoxification of non-metabolizable sugar analogs. The polypeptide is Sugar efflux transporter C (setC) (Escherichia coli (strain K12)).